The primary structure comprises 429 residues: Glucose-6-phosphate isomerase (429 aa).

Glu282 functions as the Proton donor in the catalytic mechanism. Active-site residues include His303 and Lys418.

This sequence belongs to the GPI family.

Its subcellular location is the cytoplasm. The enzyme catalyses alpha-D-glucose 6-phosphate = beta-D-fructose 6-phosphate. The protein operates within carbohydrate biosynthesis; gluconeogenesis. Its pathway is carbohydrate degradation; glycolysis; D-glyceraldehyde 3-phosphate and glycerone phosphate from D-glucose: step 2/4. Catalyzes the reversible isomerization of glucose-6-phosphate to fructose-6-phosphate. This is Glucose-6-phosphate isomerase from Mesomycoplasma hyopneumoniae (strain 232) (Mycoplasma hyopneumoniae).